The following is a 548-amino-acid chain: Probable malate:quinone oxidoreductase (548 aa).

Residues 521 to 548 (DKPQAADSTPKPQLKPQPVQKEVADIAL) form a disordered region. Residues 530 to 541 (PKPQLKPQPVQK) show a composition bias toward low complexity.

Belongs to the MQO family. Requires FAD as cofactor.

The catalysed reaction is (S)-malate + a quinone = a quinol + oxaloacetate. Its pathway is carbohydrate metabolism; tricarboxylic acid cycle; oxaloacetate from (S)-malate (quinone route): step 1/1. This Escherichia coli O17:K52:H18 (strain UMN026 / ExPEC) protein is Probable malate:quinone oxidoreductase.